The primary structure comprises 315 residues: Transaldolase (315 aa).

Lysine 125 functions as the Schiff-base intermediate with substrate in the catalytic mechanism.

Belongs to the transaldolase family. Type 1 subfamily. In terms of assembly, homodimer.

The protein localises to the cytoplasm. The enzyme catalyses D-sedoheptulose 7-phosphate + D-glyceraldehyde 3-phosphate = D-erythrose 4-phosphate + beta-D-fructose 6-phosphate. The protein operates within carbohydrate degradation; pentose phosphate pathway; D-glyceraldehyde 3-phosphate and beta-D-fructose 6-phosphate from D-ribose 5-phosphate and D-xylulose 5-phosphate (non-oxidative stage): step 2/3. Functionally, transaldolase is important for the balance of metabolites in the pentose-phosphate pathway. This is Transaldolase from Polaromonas sp. (strain JS666 / ATCC BAA-500).